A 446-amino-acid chain; its full sequence is Deoxyguanosinetriphosphate triphosphohydrolase-like protein (446 aa).

The segment at 1–28 (MSSSVWQERRHGEDKQRRNDHRSPFQRD) is disordered. The span at 7–28 (QERRHGEDKQRRNDHRSPFQRD) shows a compositional bias: basic and acidic residues. Residues 59-252 (RLTHSLEVSQ…MELADDIAYA (194 aa)) enclose the HD domain.

It belongs to the dGTPase family. Type 2 subfamily.

This Shewanella sp. (strain MR-4) protein is Deoxyguanosinetriphosphate triphosphohydrolase-like protein.